The sequence spans 83 residues: Beta-defensin 19 (83 aa).

The N-terminal stretch at 1 to 19 is a signal peptide; that stretch reads MRLALLLLAILVATELVVS. Cystine bridges form between Cys27-Cys54, Cys34-Cys48, and Cys38-Cys55.

Belongs to the beta-defensin family. In terms of tissue distribution, specifically expressed in male gonads (Sertoli cells).

Its subcellular location is the secreted. Its function is as follows. Has antibacterial activity. This Mus musculus (Mouse) protein is Beta-defensin 19 (Defb19).